Here is a 432-residue protein sequence, read N- to C-terminus: Serine/threonine-protein phosphatase 2A activator 1 (432 aa).

A disordered region spans residues 322–432 (PYSKVEDEEP…MAPTKAPWAK (111 aa)). The segment covering 366 to 389 (TVERLARRDGQRAAREKEEREDRA) has biased composition (basic and acidic residues). Residues 396 to 412 (TTGAPGATALPPTRAPG) are compositionally biased toward low complexity.

Belongs to the PTPA-type PPIase family.

The protein localises to the cytoplasm. It localises to the nucleus. The catalysed reaction is [protein]-peptidylproline (omega=180) = [protein]-peptidylproline (omega=0). Functionally, PPIases accelerate the folding of proteins. It catalyzes the cis-trans isomerization of proline imidic peptide bonds in oligopeptides. Acts as a regulatory subunit for PP2A-like phosphatases modulating their activity or substrate specificity, probably by inducing a conformational change in the catalytic subunit, a direct target of the PPIase. Can reactivate inactive phosphatase PP2A-phosphatase methylesterase complexes (PP2Ai) in presence of ATP and Mg(2+) by dissociating the inactive form from the complex. This is Serine/threonine-protein phosphatase 2A activator 1 (RRD1) from Yarrowia lipolytica (strain CLIB 122 / E 150) (Yeast).